Consider the following 130-residue polypeptide: Small ribosomal subunit protein uS9 (130 aa).

The interval 102–130 is disordered; sequence GFLTRDPRMKERKKYGLKKARRSPQFSKR. The segment covering 111–130 has biased composition (basic residues); sequence KERKKYGLKKARRSPQFSKR.

It belongs to the universal ribosomal protein uS9 family.

This is Small ribosomal subunit protein uS9 from Clostridium botulinum (strain ATCC 19397 / Type A).